Reading from the N-terminus, the 81-residue chain is GAMMA-ctenitoxin-Pn1a (81 aa).

The N-terminal stretch at 1 to 16 is a signal peptide; sequence MKVAIVFLSLLVLAFA. Residues 17–34 constitute a propeptide that is removed on maturation; the sequence is SESIEENREEFPVEESAR. Cystine bridges form between Cys35/Cys49, Cys42/Cys55, Cys46/Cys81, Cys48/Cys65, and Cys57/Cys63.

It belongs to the neurotoxin 03 (Tx2) family. 05 subfamily. As to expression, expressed by the venom gland.

It localises to the secreted. Its function is as follows. This insecticidal neurotoxin targets two types of channels/receptors. It reversibly inhibits the N-methyl-D-aspartate (NMDA)-subtype of ionotropic glutamate receptor (GRIN). It inhibits glutamate uptake from rat brain synaptosomes, and blocks GRIN in hippocampal slices. It also acts on sodium channels of both insects and mammals. On sodium channel insects, it strongly slows down channel inactivation (EC(50)=212.5 nM) and causes an increase (105%) in peak amplitude (at 1 uM) of B.germanica sodium channel (Nav), whereas it inhibits all mammalien sodium channels tested with the following order of potency: Nav1.3/SCN3A (IC(50)=1.5 uM) &gt; Nav1.6/SCN8A &gt; Nav1.5/SCN5A &gt; Nav1.4/SCN4A &gt;= Nav1.2/SCN2A. In vivo, it is highly toxic to house fly (Musca domestica), cockroach (Periplaneta americana), and cricket (Acheta domesticus). In different rat pain models (induced by PGE2, carrageenan or glutamate), it shows antinociceptive effect that may be related to an inhibitory activity on the glutamatergic system. The protein is GAMMA-ctenitoxin-Pn1a of Phoneutria nigriventer (Brazilian armed spider).